The chain runs to 258 residues: Regulatory protein RecX (258 aa).

It belongs to the RecX family.

The protein localises to the cytoplasm. Functionally, modulates RecA activity. This Streptococcus pyogenes serotype M5 (strain Manfredo) protein is Regulatory protein RecX.